Here is a 367-residue protein sequence, read N- to C-terminus: Anhydro-N-acetylmuramic acid kinase (367 aa).

Residue 11 to 18 (GTSLDGVD) participates in ATP binding.

This sequence belongs to the anhydro-N-acetylmuramic acid kinase family.

It carries out the reaction 1,6-anhydro-N-acetyl-beta-muramate + ATP + H2O = N-acetyl-D-muramate 6-phosphate + ADP + H(+). It participates in amino-sugar metabolism; 1,6-anhydro-N-acetylmuramate degradation. It functions in the pathway cell wall biogenesis; peptidoglycan recycling. Functionally, catalyzes the specific phosphorylation of 1,6-anhydro-N-acetylmuramic acid (anhMurNAc) with the simultaneous cleavage of the 1,6-anhydro ring, generating MurNAc-6-P. Is required for the utilization of anhMurNAc either imported from the medium or derived from its own cell wall murein, and thus plays a role in cell wall recycling. This chain is Anhydro-N-acetylmuramic acid kinase, found in Chromobacterium violaceum (strain ATCC 12472 / DSM 30191 / JCM 1249 / CCUG 213 / NBRC 12614 / NCIMB 9131 / NCTC 9757 / MK).